Here is a 249-residue protein sequence, read N- to C-terminus: Phosphate import ATP-binding protein PstB 2 (249 aa).

Residues Phe4–Val244 form the ABC transporter domain. Gly36–Ser43 is a binding site for ATP.

This sequence belongs to the ABC transporter superfamily. Phosphate importer (TC 3.A.1.7) family. As to quaternary structure, the complex is composed of two ATP-binding proteins (PstB), two transmembrane proteins (PstC and PstA) and a solute-binding protein (PstS).

It is found in the cell inner membrane. It carries out the reaction phosphate(out) + ATP + H2O = ADP + 2 phosphate(in) + H(+). Its function is as follows. Part of the ABC transporter complex PstSACB involved in phosphate import. Responsible for energy coupling to the transport system. The sequence is that of Phosphate import ATP-binding protein PstB 2 from Vibrio vulnificus (strain CMCP6).